The following is a 203-amino-acid chain: ESCRT-related protein CHMP1B (203 aa).

Coiled coils occupy residues Asp-13–Ala-51 and Gly-109–Ala-140. The interval Pro-172 to Gly-203 is disordered. Over residues Leu-192 to Gly-203 the composition is skewed to basic and acidic residues.

The protein belongs to the SNF7 family. As to quaternary structure, interacts with CHMP1A and LIP5. Interacts with VPS2.2.

It is found in the cytoplasm. It localises to the endosome membrane. Functionally, involved in ESCRT-dependent multivesicular body (MVB) formation and sorting of endosomal cargo proteins into MVBs. Mediates the MVB sorting of the auxin carriers PIN1, PIN2 and AUX1. Required for embryonic axis establishment and seedling growth. Required for autophagic degradation of plastid proteins. Promotes the efficient sequestration of cargo from plastids into autophagosomes. Mediates the efficient delivery of autophagic plastid bodies to the vacuole, but not into the cytoplasm. In Arabidopsis thaliana (Mouse-ear cress), this protein is ESCRT-related protein CHMP1B.